The primary structure comprises 468 residues: UDP-N-acetylmuramate--L-alanine ligase (468 aa).

112–118 (GTHGKTT) is a binding site for ATP.

Belongs to the MurCDEF family.

It localises to the cytoplasm. The enzyme catalyses UDP-N-acetyl-alpha-D-muramate + L-alanine + ATP = UDP-N-acetyl-alpha-D-muramoyl-L-alanine + ADP + phosphate + H(+). It participates in cell wall biogenesis; peptidoglycan biosynthesis. Cell wall formation. The sequence is that of UDP-N-acetylmuramate--L-alanine ligase from Bordetella pertussis (strain Tohama I / ATCC BAA-589 / NCTC 13251).